Here is a 304-residue protein sequence, read N- to C-terminus: MWFKNLTLYRFNKPFAVETEALETALADFTFSPCSSQDVSKFGFSNALGKKGCSLVHSADNRHLICVTKEEKILPGQVIKEALEEKVALIEDEENRKMAKKEKDALKDEIITSLLPRAFSRRSQTHALILPELEMILVDSSSATKAEELLALLRKALGSLPVIPLSFKAPVESNLTEWLKLGSAPLPFEMQDEAELKSEADEGGIVRFKQQDLKEDEVLAHLATGKQVHKLALHFGQSIALLLQSDASVKRLKFSEEFRAGNDEVGTDDPMARLDADFALMGSELVALMHALVAALGGLEDAQV.

Belongs to the RdgC family.

It is found in the cytoplasm. Its subcellular location is the nucleoid. In terms of biological role, may be involved in recombination. The sequence is that of Recombination-associated protein RdgC from Shewanella baltica (strain OS185).